The sequence spans 128 residues: Putative lipid-binding protein At4g00165 (128 aa).

The first 23 residues, 1–23, serve as a signal peptide directing secretion; that stretch reads MGISKALRSLLILLLLNITFFFG. 4 cysteine pairs are disulfide-bonded: C34–C90, C46–C76, C56–C75, and C92–C128.

This sequence belongs to the plant LTP family. PEARLI1 subfamily.

The protein localises to the secreted. This Arabidopsis thaliana (Mouse-ear cress) protein is Putative lipid-binding protein At4g00165.